The following is a 590-amino-acid chain: UvrABC system protein C (590 aa).

In terms of domain architecture, GIY-YIG spans 15 to 98; it reads AEPGVYQFVA…VKRHQPRYNV (84 aa). Positions 207–242 constitute a UVR domain; that stretch reads GALADPLRREMAAAAQAEAFERAANLRDRLAVVEGF.

This sequence belongs to the UvrC family. In terms of assembly, interacts with UvrB in an incision complex.

The protein localises to the cytoplasm. The UvrABC repair system catalyzes the recognition and processing of DNA lesions. UvrC both incises the 5' and 3' sides of the lesion. The N-terminal half is responsible for the 3' incision and the C-terminal half is responsible for the 5' incision. This is UvrABC system protein C from Halobacterium salinarum (strain ATCC 29341 / DSM 671 / R1).